The sequence spans 104 residues: Large ribosomal subunit protein uL24 (104 aa).

The protein belongs to the universal ribosomal protein uL24 family. In terms of assembly, part of the 50S ribosomal subunit.

Its function is as follows. One of two assembly initiator proteins, it binds directly to the 5'-end of the 23S rRNA, where it nucleates assembly of the 50S subunit. Functionally, one of the proteins that surrounds the polypeptide exit tunnel on the outside of the subunit. The chain is Large ribosomal subunit protein uL24 from Methylorubrum populi (strain ATCC BAA-705 / NCIMB 13946 / BJ001) (Methylobacterium populi).